We begin with the raw amino-acid sequence, 46 residues long: Iota-conotoxin RXIA (46 aa).

4-hydroxyproline; partial is present on residues Pro-2 and Pro-11. Intrachain disulfides connect Cys-5/Cys-19, Cys-12/Cys-22, Cys-18/Cys-27, and Cys-21/Cys-38. Residue Pro-29 is modified to 4-hydroxyproline. Phe-44 is subject to D-phenylalanine.

It belongs to the conotoxin I1 superfamily. Post-translationally, the natural D-Phe-44 form of the peptide is more potent than the L-Phe-44 form. Expressed by the venom duct.

The protein resides in the secreted. Its function is as follows. Iota-conotoxins bind to voltage-gated sodium channels and act as agonists by shifting the voltage-dependence of activation to more hyperpolarized levels. This toxin acts on Nav1.6/SCN8A &gt; Nav1.2/SCN2A &gt; Nav1.7/SCN9A sodium channels. Produces general excitatory symptoms upon intracorporeal injection and repetitive action potentials in the frog cutaneous pectoris muscle. Natural peptide (with D-Phe) is active on nerve, but not on muscle. Synthetic peptide (with L-Phe) is not active on both nerve and muscle. The polypeptide is Iota-conotoxin RXIA (Conus radiatus (Rayed cone)).